The primary structure comprises 231 residues: Putative N-acetylmannosamine-6-phosphate 2-epimerase (231 aa).

This sequence belongs to the NanE family.

It carries out the reaction an N-acyl-D-glucosamine 6-phosphate = an N-acyl-D-mannosamine 6-phosphate. Its pathway is amino-sugar metabolism; N-acetylneuraminate degradation; D-fructose 6-phosphate from N-acetylneuraminate: step 3/5. Functionally, converts N-acetylmannosamine-6-phosphate (ManNAc-6-P) to N-acetylglucosamine-6-phosphate (GlcNAc-6-P). This is Putative N-acetylmannosamine-6-phosphate 2-epimerase from Listeria innocua serovar 6a (strain ATCC BAA-680 / CLIP 11262).